The sequence spans 194 residues: MKVILLERVEGTGVLGDEVTVKDGFARNYLLPRGKALRATKANLATFEAQRAEIEARNVKNRESAAKNGEALDGTQYILIRQAGESGQLYGSVAGRDVADAIKAEGGKVDRSMVVLDKPIKTLGVHEVKVKLHAEVTITVTLNIARSQDEAERQARGENVINSQFEEDRAAEAEAAQDMAEGGAGSFEGDHYEA.

A disordered region spans residues 148-194 (QDEAERQARGENVINSQFEEDRAAEAEAAQDMAEGGAGSFEGDHYEA).

Belongs to the bacterial ribosomal protein bL9 family.

Binds to the 23S rRNA. The sequence is that of Large ribosomal subunit protein bL9 from Caulobacter vibrioides (strain ATCC 19089 / CIP 103742 / CB 15) (Caulobacter crescentus).